The sequence spans 553 residues: MYCVQCEQTMITPKGNGCSFSQGMCGKTAETSDLQDLLIACLHSLSAWAVKAREYGIINHEADNFAPRAFFATLTNVNFDSARIAGYAQQALIYRNQLIKAVSAFESNPTLDHPLANIELNGVSVDKLARQAKQFALDTDRAKIGEEAHGVRLLCLYGLKGAAAYMEHAYVLDKFDNDIYAQYHGFMSWLGTHPSDLNELLEKALAIGSMNFNVMAMLDAGETEHFGNPVPAMVNVRPVKGKCILISGHDLKDLKELLEQTEGKGINVYTHGEMLPAHGYPELKKYKHLVGNFGSGWQNQQKEFARFPGAIVMTSNCLIDPNVGDYADRIFTRNIVGWPGVTHLEEHDFSPVIEKALECDGFPYTELEHLITVGFGRKTLIDASDAVIDLVKAGKLSHVFVIGGCDGDKEERHYYTDLAYALPKDTAVLTLGCGKYRFNKLDFGTIDGGLPRLLDAGQCNDTYSAIMLAVTLSQKLGIGLNELPLSIVLSWFEQKAIIVLLTLLALGVKNVYSGPSKPAFLNDNVMALLHEKFGLSGLTTPEQDFGHIIGKNA.

Residues Cys-3, Cys-6, Cys-18, and Cys-25 each coordinate [2Fe-2S] cluster. Hybrid [4Fe-2O-2S] cluster contacts are provided by His-249, Glu-273, Cys-317, Cys-405, Cys-433, Cys-459, Glu-493, and Lys-495. Residue Cys-405 is modified to Cysteine persulfide.

It belongs to the HCP family. The cofactor is [2Fe-2S] cluster. It depends on hybrid [4Fe-2O-2S] cluster as a cofactor.

It localises to the cytoplasm. It catalyses the reaction A + NH4(+) + H2O = hydroxylamine + AH2 + H(+). Catalyzes the reduction of hydroxylamine to form NH(3) and H(2)O. The sequence is that of Hydroxylamine reductase from Actinobacillus succinogenes (strain ATCC 55618 / DSM 22257 / CCUG 43843 / 130Z).